We begin with the raw amino-acid sequence, 757 residues long: RNA-directed RNA polymerase catalytic subunit (757 aa).

Positions 56–78 are disordered; sequence TTNTETGAHQLNPIDGPLPEDNE. Short sequence motifs (nuclear localization signal) lie at residues 187-195 and 203-216; these read RKRRVRDNM and RTIG…NKRS. Residues 249–256 form a promoter-binding site region; that stretch reads RGFVYFVE. The 198-residue stretch at 286–483 folds into the RdRp catalytic domain; sequence VRKMMTNSQD…GINMSKKKSY (198 aa).

It belongs to the influenza viruses polymerase PB1 family. In terms of assembly, influenza RNA polymerase is composed of three subunits: PB1, PB2 and PA. Interacts (via N-terminus) with PA (via C-terminus). Interacts (via C-terminus) with PB2 (via N-terminus); this interaction is essential for transcription initiation. Post-translationally, phosphorylated by host PRKCA.

The protein resides in the host nucleus. It is found in the host cytoplasm. It catalyses the reaction RNA(n) + a ribonucleoside 5'-triphosphate = RNA(n+1) + diphosphate. RNA-dependent RNA polymerase which is responsible for replication and transcription of virus RNA segments. The transcription of viral mRNAs occurs by a unique mechanism called cap-snatching. 5' methylated caps of cellular mRNAs are cleaved after 10-13 nucleotides by PA. In turn, these short capped RNAs are used as primers by PB1 for transcription of viral mRNAs. During virus replication, PB1 initiates RNA synthesis and copy vRNA into complementary RNA (cRNA) which in turn serves as a template for the production of more vRNAs. This Aves (Human) protein is RNA-directed RNA polymerase catalytic subunit.